Here is a 139-residue protein sequence, read N- to C-terminus: ATP synthase epsilon chain (139 aa).

It belongs to the ATPase epsilon chain family. F-type ATPases have 2 components, CF(1) - the catalytic core - and CF(0) - the membrane proton channel. CF(1) has five subunits: alpha(3), beta(3), gamma(1), delta(1), epsilon(1). CF(0) has three main subunits: a, b and c.

It is found in the cell inner membrane. Produces ATP from ADP in the presence of a proton gradient across the membrane. This is ATP synthase epsilon chain from Pseudomonas syringae pv. tomato (strain ATCC BAA-871 / DC3000).